The sequence spans 219 residues: Chloramphenicol acetyltransferase (219 aa).

Catalysis depends on H193, which acts as the Proton acceptor.

Belongs to the chloramphenicol acetyltransferase family. Homotrimer.

It carries out the reaction chloramphenicol + acetyl-CoA = chloramphenicol 3-acetate + CoA. Its function is as follows. This enzyme is an effector of chloramphenicol resistance in bacteria. In Klebsiella sp, this protein is Chloramphenicol acetyltransferase (cat).